The following is a 124-amino-acid chain: Small ribosomal subunit protein uS12 (124 aa).

Positions methionine 1–proline 42 are disordered. Aspartate 89 bears the 3-methylthioaspartic acid mark. Positions alanine 105–glutamate 124 are disordered. The span at glycine 113–glutamate 124 shows a compositional bias: basic residues.

It belongs to the universal ribosomal protein uS12 family. Part of the 30S ribosomal subunit. Contacts proteins S8 and S17. May interact with IF1 in the 30S initiation complex.

Its function is as follows. With S4 and S5 plays an important role in translational accuracy. Functionally, interacts with and stabilizes bases of the 16S rRNA that are involved in tRNA selection in the A site and with the mRNA backbone. Located at the interface of the 30S and 50S subunits, it traverses the body of the 30S subunit contacting proteins on the other side and probably holding the rRNA structure together. The combined cluster of proteins S8, S12 and S17 appears to hold together the shoulder and platform of the 30S subunit. The chain is Small ribosomal subunit protein uS12 from Salinibacter ruber (strain DSM 13855 / M31).